A 406-amino-acid polypeptide reads, in one-letter code: 3-oxoacyl-[acyl-carrier-protein] synthase 1 (406 aa).

The 405-residue stretch at 1 to 405 (MRRVVITGIG…GTNVSLIVKK (405 aa)) folds into the Ketosynthase family 3 (KS3) domain. Catalysis depends on for beta-ketoacyl synthase activity residues Cys164, His299, and His335.

Belongs to the thiolase-like superfamily. Beta-ketoacyl-ACP synthases family. In terms of assembly, homodimer.

It localises to the cytoplasm. The catalysed reaction is a fatty acyl-[ACP] + malonyl-[ACP] + H(+) = a 3-oxoacyl-[ACP] + holo-[ACP] + CO2. It catalyses the reaction (3Z)-decenoyl-[ACP] + malonyl-[ACP] + H(+) = 3-oxo-(5Z)-dodecenoyl-[ACP] + holo-[ACP] + CO2. It participates in lipid metabolism; fatty acid biosynthesis. Functionally, involved in the type II fatty acid elongation cycle. Catalyzes the elongation of a wide range of acyl-ACP by the addition of two carbons from malonyl-ACP to an acyl acceptor. Can also use unsaturated fatty acids. Catalyzes a key reaction in unsaturated fatty acid (UFA) synthesis, the elongation of the cis-3-decenoyl-ACP produced by FabA. This is 3-oxoacyl-[acyl-carrier-protein] synthase 1 (fabB) from Buchnera aphidicola subsp. Acyrthosiphon pisum (strain APS) (Acyrthosiphon pisum symbiotic bacterium).